Here is a 450-residue protein sequence, read N- to C-terminus: Homogentisate 1,2-dioxygenase (450 aa).

The active-site Proton acceptor is His304. Residues His347 and Glu353 each coordinate Fe cation. Tyr362 and His383 together coordinate homogentisate. Position 383 (His383) interacts with Fe cation.

Belongs to the homogentisate dioxygenase family. Hexamer; dimer of trimers. Fe cation serves as cofactor.

The catalysed reaction is homogentisate + O2 = 4-maleylacetoacetate + H(+). It functions in the pathway amino-acid degradation; L-phenylalanine degradation; acetoacetate and fumarate from L-phenylalanine: step 4/6. Involved in the catabolism of homogentisate (2,5-dihydroxyphenylacetate or 2,5-OH-PhAc), a central intermediate in the degradation of phenylalanine and tyrosine. Catalyzes the oxidative ring cleavage of the aromatic ring of homogentisate to yield maleylacetoacetate. The chain is Homogentisate 1,2-dioxygenase from Burkholderia thailandensis (strain ATCC 700388 / DSM 13276 / CCUG 48851 / CIP 106301 / E264).